We begin with the raw amino-acid sequence, 416 residues long: 3-isopropylmalate dehydratase large subunit (416 aa).

[4Fe-4S] cluster contacts are provided by Cys-297, Cys-357, and Cys-360.

Belongs to the aconitase/IPM isomerase family. LeuC type 2 subfamily. In terms of assembly, heterodimer of LeuC and LeuD. Requires [4Fe-4S] cluster as cofactor.

It catalyses the reaction (2R,3S)-3-isopropylmalate = (2S)-2-isopropylmalate. It functions in the pathway amino-acid biosynthesis; L-leucine biosynthesis; L-leucine from 3-methyl-2-oxobutanoate: step 2/4. Its function is as follows. Catalyzes the isomerization between 2-isopropylmalate and 3-isopropylmalate, via the formation of 2-isopropylmaleate. The chain is 3-isopropylmalate dehydratase large subunit from Methanoregula boonei (strain DSM 21154 / JCM 14090 / 6A8).